We begin with the raw amino-acid sequence, 79 residues long: Acyl carrier protein (79 aa).

A Carrier domain is found at 2 to 77 (DNIEQRVKKI…LAIDFAKSKA (76 aa)). Serine 37 carries the O-(pantetheine 4'-phosphoryl)serine modification.

The protein belongs to the acyl carrier protein (ACP) family. Post-translationally, 4'-phosphopantetheine is transferred from CoA to a specific serine of apo-ACP by AcpS. This modification is essential for activity because fatty acids are bound in thioester linkage to the sulfhydryl of the prosthetic group.

It localises to the cytoplasm. It functions in the pathway lipid metabolism; fatty acid biosynthesis. Its function is as follows. Carrier of the growing fatty acid chain in fatty acid biosynthesis. The chain is Acyl carrier protein from Polynucleobacter necessarius subsp. necessarius (strain STIR1).